Here is a 495-residue protein sequence, read N- to C-terminus: Glycerol kinase (495 aa).

Threonine 11 contacts ADP. ATP-binding residues include threonine 11, threonine 12, and serine 13. Threonine 11 provides a ligand contact to sn-glycerol 3-phosphate. Arginine 15 is an ADP binding site. Residues arginine 81, glutamate 82, tyrosine 133, and aspartate 242 each contribute to the sn-glycerol 3-phosphate site. Glycerol is bound by residues arginine 81, glutamate 82, tyrosine 133, aspartate 242, and glutamine 243. The ADP site is built by threonine 264 and glycine 307. Residues threonine 264, glycine 307, glutamine 311, and glycine 408 each coordinate ATP. Glycine 408 and asparagine 412 together coordinate ADP.

The protein belongs to the FGGY kinase family.

It carries out the reaction glycerol + ATP = sn-glycerol 3-phosphate + ADP + H(+). Its pathway is polyol metabolism; glycerol degradation via glycerol kinase pathway; sn-glycerol 3-phosphate from glycerol: step 1/1. Inhibited by fructose 1,6-bisphosphate (FBP). Functionally, key enzyme in the regulation of glycerol uptake and metabolism. Catalyzes the phosphorylation of glycerol to yield sn-glycerol 3-phosphate. The chain is Glycerol kinase from Acinetobacter baylyi (strain ATCC 33305 / BD413 / ADP1).